The sequence spans 311 residues: ATP synthase subunit a (311 aa).

6 helical membrane-spanning segments follow: residues 62–82, 123–143, 179–199, 213–233, 253–273, and 276–296; these read AVHV…GFFM, VAPM…MDLI, VTVF…WGFI, FWYF…VALI, IFIL…LGGI, and FGWA…FMVL.

Belongs to the ATPase A chain family. As to quaternary structure, F-type ATPases have 2 components, CF(1) - the catalytic core - and CF(0) - the membrane proton channel. CF(1) has five subunits: alpha(3), beta(3), gamma(1), delta(1), epsilon(1). CF(0) has three main subunits: a(1), b(2) and c(9-12). The alpha and beta chains form an alternating ring which encloses part of the gamma chain. CF(1) is attached to CF(0) by a central stalk formed by the gamma and epsilon chains, while a peripheral stalk is formed by the delta and b chains.

The protein localises to the cell inner membrane. In terms of biological role, key component of the proton channel; it plays a direct role in the translocation of protons across the membrane. This chain is ATP synthase subunit a, found in Teredinibacter turnerae (strain ATCC 39867 / T7901).